Here is a 502-residue protein sequence, read N- to C-terminus: Peroxisomal catalase (502 aa).

Active-site residues include His-64 and Asn-137. Tyr-347 contacts heme. The Microbody targeting signal signature appears at 500–502; that stretch reads AKM.

The protein belongs to the catalase family. Heme serves as cofactor.

Its subcellular location is the peroxisome matrix. It carries out the reaction 2 H2O2 = O2 + 2 H2O. Functionally, catalyzes the degradation of hydrogen peroxide (H(2)O(2)) generated by peroxisomal oxidases to water and oxygen, thereby protecting cells from the toxic effects of hydrogen peroxide. This Toxoplasma gondii protein is Peroxisomal catalase.